A 431-amino-acid chain; its full sequence is Metal-binding activator 1 (431 aa).

A DNA-binding region (copper-fist) is located at residues 1 to 40 (MILIDDIKYACMECVRGHRSSSCKHHERPLLQVRSKGRPG). The Zn(2+) site is built by Cys-11, Cys-14, Cys-23, and His-25.

The protein localises to the nucleus. Its function is as follows. Copper ion-sensing transcription factor which activates transcription of the CTR1 copper transporter under low-copper conditions. Promotes filamentous and invasive growth. In Candida albicans (strain SC5314 / ATCC MYA-2876) (Yeast), this protein is Metal-binding activator 1 (MAC1).